A 142-amino-acid polypeptide reads, in one-letter code: Large ribosomal subunit protein uL13 (142 aa).

Belongs to the universal ribosomal protein uL13 family. In terms of assembly, part of the 50S ribosomal subunit.

This protein is one of the early assembly proteins of the 50S ribosomal subunit, although it is not seen to bind rRNA by itself. It is important during the early stages of 50S assembly. This is Large ribosomal subunit protein uL13 from Delftia acidovorans (strain DSM 14801 / SPH-1).